The sequence spans 202 residues: ATP-dependent Clp protease proteolytic subunit (202 aa).

Catalysis depends on Ser-101, which acts as the Nucleophile. His-126 is an active-site residue.

It belongs to the peptidase S14 family. In terms of assembly, component of the chloroplastic Clp protease core complex.

The protein resides in the plastid. It is found in the chloroplast stroma. It catalyses the reaction Hydrolysis of proteins to small peptides in the presence of ATP and magnesium. alpha-casein is the usual test substrate. In the absence of ATP, only oligopeptides shorter than five residues are hydrolyzed (such as succinyl-Leu-Tyr-|-NHMec, and Leu-Tyr-Leu-|-Tyr-Trp, in which cleavage of the -Tyr-|-Leu- and -Tyr-|-Trp bonds also occurs).. Cleaves peptides in various proteins in a process that requires ATP hydrolysis. Has a chymotrypsin-like activity. Plays a major role in the degradation of misfolded proteins. In Illicium oligandrum (Star anise), this protein is ATP-dependent Clp protease proteolytic subunit.